The sequence spans 362 residues: 3-isopropylmalate dehydrogenase (362 aa).

77-88 is a binding site for NAD(+); it reads GPKWGTGAVRPE. Residues Arg-95, Arg-105, Arg-134, and Asp-223 each contribute to the substrate site. 3 residues coordinate Mg(2+): Asp-223, Asp-248, and Asp-252. An NAD(+)-binding site is contributed by 287 to 298; sequence GSAPDLPPNKVN.

Belongs to the isocitrate and isopropylmalate dehydrogenases family. Homodimer. Mg(2+) is required as a cofactor. The cofactor is Mn(2+).

It localises to the cytoplasm. The catalysed reaction is (2R,3S)-3-isopropylmalate + NAD(+) = 4-methyl-2-oxopentanoate + CO2 + NADH. It functions in the pathway amino-acid biosynthesis; L-leucine biosynthesis; L-leucine from 3-methyl-2-oxobutanoate: step 3/4. In terms of biological role, catalyzes the oxidation of 3-carboxy-2-hydroxy-4-methylpentanoate (3-isopropylmalate) to 3-carboxy-4-methyl-2-oxopentanoate. The product decarboxylates to 4-methyl-2 oxopentanoate. In Blastobotrys adeninivorans (Yeast), this protein is 3-isopropylmalate dehydrogenase (LEU2).